Consider the following 459-residue polypeptide: Vacuolar cation/proton exchanger 3 (459 aa).

The Cytoplasmic segment spans residues 1-67 (MGSIVEPWAA…TLKNILSNLQ (67 aa)). Residues 68–88 (EVILGTKLTLLFLAIPLAILA) form a helical membrane-spanning segment. Topologically, residues 89 to 95 (NSYNYGR) are extracellular. A helical membrane pass occupies residues 96 to 116 (PLIFGLSLIGLTPLAERVSFL). The Cytoplasmic segment spans residues 117 to 129 (TEQLAFYTGPTVG). The chain crosses the membrane as a helical span at residues 130–150 (GLLNATCGNATELIIAILALA). The cation selection stretch occupies residues 137-172 (GNATELIIAILALANNKVAVVKYSLLGSILSNLLLV). Over 151 to 161 (NNKVAVVKYSL) the chain is Extracellular. Residues 162 to 182 (LGSILSNLLLVLGTSLFFGGI) form a helical membrane-spanning segment. Residues 183–195 (ANIRREQRFDRKQ) lie on the Cytoplasmic side of the membrane. Residues 196–216 (ADVNFFLLLMGLLCHLLPLLL) form a helical membrane-spanning segment. Residues 217–238 (KYAATGEVSTSMINKMSLTLSR) are Extracellular-facing. A helical transmembrane segment spans residues 239 to 259 (TSSIVMLIAYIAYLIFQLWTH). Residues 260-283 (RQLFEAQQDDDDAYDDEVSVEETP) are Cytoplasmic-facing. The chain crosses the membrane as a helical span at residues 284–304 (VIGFWSGFAWLVGMTIVIALL). Over 305–327 (SEYVVDTIEDASDSWGLSVSFIS) the chain is Extracellular. A helical membrane pass occupies residues 328–348 (IILLPIVGNAAEHAGAIIFAF). Residues 335–370 (GNAAEHAGAIIFAFKNKLDISLGVALGSATQISLFV) are cation selection. Over 349 to 362 (KNKLDISLGVALGS) the chain is Cytoplasmic. The helical transmembrane segment at 363–383 (ATQISLFVVPLSVIVAWILGI) threads the bilayer. The Extracellular segment spans residues 384 to 386 (KMD). A helical transmembrane segment spans residues 387-407 (LNFNILETSSLALAIIITAFT). The Cytoplasmic portion of the chain corresponds to 408 to 417 (LQDGTSHYMK). Residues 418–438 (GLVLLLCYVIIAACFFVDQIP) traverse the membrane as a helical segment. The Extracellular portion of the chain corresponds to 439 to 459 (QPNDLDVGLQPMNNLGEVFSA).

This sequence belongs to the Ca(2+):cation antiporter (CaCA) (TC 2.A.19) family. Cation/proton exchanger (CAX) subfamily. As to expression, expressed in roots, stems and flowers.

The protein localises to the vacuole membrane. With respect to regulation, inhibited by excess of Ca(2+). Vacuolar cation/proton exchanger (CAX). Translocates Ca(2+) and other metal ions into vacuoles using the proton gradient formed by H(+)-ATPase and H(+)-pyrophosphatase. Involved in ion homeostasis in association with CAX1. This chain is Vacuolar cation/proton exchanger 3 (CAX3), found in Arabidopsis thaliana (Mouse-ear cress).